A 372-amino-acid polypeptide reads, in one-letter code: Carbamoyl phosphate synthase small chain (372 aa).

The segment at 1 to 182 is CPSase; it reads MTLYCKRGYK…PKAPIVHLGN (182 aa). The L-glutamine site is built by serine 53, glycine 234, and glycine 236. The 187-residue stretch at 186–372 folds into the Glutamine amidotransferase type-1 domain; it reads TIVVVDCGVK…KFKKMVSRNA (187 aa). Catalysis depends on cysteine 262, which acts as the Nucleophile. Leucine 263, glutamine 266, asparagine 304, glycine 306, and tyrosine 307 together coordinate L-glutamine. Active-site residues include histidine 347 and glutamate 349.

This sequence belongs to the CarA family. Composed of two chains; the small (or glutamine) chain promotes the hydrolysis of glutamine to ammonia, which is used by the large (or ammonia) chain to synthesize carbamoyl phosphate. Tetramer of heterodimers (alpha,beta)4.

The catalysed reaction is hydrogencarbonate + L-glutamine + 2 ATP + H2O = carbamoyl phosphate + L-glutamate + 2 ADP + phosphate + 2 H(+). It catalyses the reaction L-glutamine + H2O = L-glutamate + NH4(+). It participates in amino-acid biosynthesis; L-arginine biosynthesis; carbamoyl phosphate from bicarbonate: step 1/1. Its pathway is pyrimidine metabolism; UMP biosynthesis via de novo pathway; (S)-dihydroorotate from bicarbonate: step 1/3. Functionally, small subunit of the glutamine-dependent carbamoyl phosphate synthetase (CPSase). CPSase catalyzes the formation of carbamoyl phosphate from the ammonia moiety of glutamine, carbonate, and phosphate donated by ATP, constituting the first step of 2 biosynthetic pathways, one leading to arginine and/or urea and the other to pyrimidine nucleotides. The small subunit (glutamine amidotransferase) binds and cleaves glutamine to supply the large subunit with the substrate ammonia. The polypeptide is Carbamoyl phosphate synthase small chain (Sulfurisphaera tokodaii (strain DSM 16993 / JCM 10545 / NBRC 100140 / 7) (Sulfolobus tokodaii)).